A 475-amino-acid polypeptide reads, in one-letter code: Alpha,alpha-trehalose-phosphate synthase [UDP-forming] (475 aa).

The D-glucose 6-phosphate site is built by tyrosine 93 and aspartate 147. Residues arginine 285 and lysine 290 each coordinate UDP. Residues arginine 285 and lysine 290 each coordinate UDP-alpha-D-glucose. Residue arginine 323 participates in D-glucose 6-phosphate binding. Residue 384 to 392 (DGMNLVSYE) participates in UDP-alpha-D-glucose binding. Position 388-392 (388-392 (LVSYE)) interacts with UDP.

Belongs to the glycosyltransferase 20 family.

It catalyses the reaction D-glucose 6-phosphate + UDP-alpha-D-glucose = alpha,alpha-trehalose 6-phosphate + UDP + H(+). It participates in carbohydrate biosynthesis. Functionally, synthase catalytic subunit of the trehalose synthase complex that catalyzes the production of trehalose from glucose-6-phosphate and UDP-alpha-D-glucose in a two step process. The polypeptide is Alpha,alpha-trehalose-phosphate synthase [UDP-forming] (Pichia angusta (Yeast)).